The primary structure comprises 134 residues: Small ribosomal subunit protein uS9 (134 aa).

It belongs to the universal ribosomal protein uS9 family.

The protein is Small ribosomal subunit protein uS9 of Pseudothermotoga lettingae (strain ATCC BAA-301 / DSM 14385 / NBRC 107922 / TMO) (Thermotoga lettingae).